Here is a 341-residue protein sequence, read N- to C-terminus: tRNA N6-adenosine threonylcarbamoyltransferase (341 aa).

Positions 115 and 119 each coordinate Fe cation. Substrate-binding positions include 137–141, Asp-170, Gly-183, Asp-187, and Asn-276; that span reads AVSGG. Asp-306 contacts Fe cation.

The protein belongs to the KAE1 / TsaD family. The cofactor is Fe(2+).

Its subcellular location is the cytoplasm. It carries out the reaction L-threonylcarbamoyladenylate + adenosine(37) in tRNA = N(6)-L-threonylcarbamoyladenosine(37) in tRNA + AMP + H(+). Functionally, required for the formation of a threonylcarbamoyl group on adenosine at position 37 (t(6)A37) in tRNAs that read codons beginning with adenine. Is involved in the transfer of the threonylcarbamoyl moiety of threonylcarbamoyl-AMP (TC-AMP) to the N6 group of A37, together with TsaE and TsaB. TsaD likely plays a direct catalytic role in this reaction. This is tRNA N6-adenosine threonylcarbamoyltransferase from Lacticaseibacillus casei (strain BL23) (Lactobacillus casei).